The following is a 77-amino-acid chain: Acyl carrier protein (77 aa).

In terms of domain architecture, Carrier spans 2–77; it reads SSIDKRIKEI…DAIDYITDHT (76 aa). An O-(pantetheine 4'-phosphoryl)serine modification is found at Ser-37.

It belongs to the acyl carrier protein (ACP) family. 4'-phosphopantetheine is transferred from CoA to a specific serine of apo-ACP by AcpS. This modification is essential for activity because fatty acids are bound in thioester linkage to the sulfhydryl of the prosthetic group.

It is found in the cytoplasm. The protein operates within lipid metabolism; fatty acid biosynthesis. Carrier of the growing fatty acid chain in fatty acid biosynthesis. The sequence is that of Acyl carrier protein from Geotalea uraniireducens (strain Rf4) (Geobacter uraniireducens).